Here is a 979-residue protein sequence, read N- to C-terminus: Disks large-associated protein 3 (979 aa).

Over residues 1–10 (MRGYHGDRGS) the composition is skewed to basic and acidic residues. Disordered regions lie at residues 1–20 (MRGY…FADQ), 52–95 (AGLG…MYPG), 136–169 (FHTL…SPSR), 182–291 (AKSH…CLEG), 400–429 (AMGD…TRRS), and 537–581 (FRKA…RCSS). Serine 58 bears the Phosphoserine mark. The segment covering 73–86 (PEGGPAGAGVGGGS) has biased composition (gly residues). A compositionally biased stretch (basic and acidic residues) spans 190-202 (PGKRDYNGPKAEG). A compositionally biased stretch (gly residues) spans 203–218 (RGGSGGDSYPGPGSGG). Residues 221 to 246 (TSHHHHHHHHHHHHQSRHGKRSKSKD) show a composition bias toward basic residues. Residues serine 406, serine 409, serine 412, and serine 416 each carry the phosphoserine modification. The span at 540–549 (APPPIPPGSQ) shows a compositional bias: pro residues. Phosphoserine is present on residues serine 643 and serine 645. 2 disordered regions span residues 741–790 (EGYP…RASP) and 908–940 (EEKK…DRQR). Basic and acidic residues-rich tracts occupy residues 769–779 (GRRDSWIERGS) and 927–940 (PVKE…DRQR). 3 positions are modified to phosphoserine: serine 932, serine 935, and serine 967.

This sequence belongs to the SAPAP family. Interacts with DLG4/PSD-95.

The protein localises to the cell membrane. It is found in the postsynaptic density. The protein resides in the synapse. May play a role in the molecular organization of synapses and neuronal cell signaling. Could be an adapter protein linking ion channel to the subsynaptic cytoskeleton. May induce enrichment of PSD-95/SAP90 at the plasma membrane. The polypeptide is Disks large-associated protein 3 (DLGAP3) (Homo sapiens (Human)).